Consider the following 168-residue polypeptide: Quinol oxidase subunit 2 (168 aa).

The helical transmembrane segment at 9–31 threads the bilayer; sequence EVWFIVMLVLVLIFFSWNVYYLS.

It belongs to the cytochrome c oxidase subunit 2 family.

The protein localises to the cell membrane. It catalyses the reaction 2 a quinol + O2 = 2 a quinone + 2 H2O. In terms of biological role, the terminal oxidase is the component of the respiratory chain that catalyzes the reduction of oxygen to water. Subunits 1-3 form the functional core of the enzyme complex. Its function is as follows. Subunit 2 transfers the electrons from caldariella quinol to the bimetallic center of the catalytic subunit 1 that is formed by heme A3 and Cu(B). This Sulfolobus acidocaldarius (strain ATCC 33909 / DSM 639 / JCM 8929 / NBRC 15157 / NCIMB 11770) protein is Quinol oxidase subunit 2 (soxA).